Consider the following 463-residue polypeptide: 6-phosphofructo-2-kinase/fructose-2,6-bisphosphatase 3 (463 aa).

The segment at 1-246 (MPLELTQSRV…VYYLMNIHWQ (246 aa)) is 6-phosphofructo-2-kinase. 42–50 (GLPARGKTY) contributes to the ATP binding site. Residues R75 and R99 each contribute to the beta-D-fructose 6-phosphate site. D125 is a catalytic residue. Beta-D-fructose 6-phosphate-binding residues include T127 and R133. Residue C155 is part of the active site. 164–169 (NIMEVK) contributes to the ATP binding site. Residues K169, R191, and Y195 each contribute to the beta-D-fructose 6-phosphate site. The fructose-2,6-bisphosphatase stretch occupies residues 247 to 463 (PRTIYLCRHG…PNPLMRSNSH (217 aa)). R254 contributes to the beta-D-fructose 2,6-bisphosphate binding site. Residue H255 is the Tele-phosphohistidine intermediate of the active site. Beta-D-fructose 2,6-bisphosphate contacts are provided by N261 and G267. The active-site Proton donor/acceptor is E324. Y335 lines the beta-D-fructose 2,6-bisphosphate pocket. 346–349 (YALA) contacts ATP. Beta-D-fructose 2,6-bisphosphate is bound by residues K353, Y364, and Q390. Residues 390–394 (QAVCV) and Y426 contribute to the ATP site. The tract at residues 444 to 463 (RERSEDAKKGPNPLMRSNSH) is disordered. The residue at position 462 (S462) is a Phosphoserine; by AMPK and PKA.

This sequence in the C-terminal section; belongs to the phosphoglycerate mutase family. As to quaternary structure, homodimer. Forms a heterodimer with PFKFB2. In terms of processing, phosphorylation by AMPK stimulates activity. In terms of tissue distribution, brain.

The enzyme catalyses beta-D-fructose 2,6-bisphosphate + H2O = beta-D-fructose 6-phosphate + phosphate. It catalyses the reaction beta-D-fructose 6-phosphate + ATP = beta-D-fructose 2,6-bisphosphate + ADP + H(+). In terms of biological role, catalyzes both the synthesis and degradation of fructose 2,6-bisphosphate. In Bos taurus (Bovine), this protein is 6-phosphofructo-2-kinase/fructose-2,6-bisphosphatase 3 (PFKFB3).